The chain runs to 234 residues: LexA repressor (234 aa).

A DNA-binding region (H-T-H motif) is located at residues 41–61 (RAEIAAELGFRSPNAAEEHLK). Active-site for autocatalytic cleavage activity residues include S152 and K189.

The protein belongs to the peptidase S24 family. As to quaternary structure, homodimer.

The catalysed reaction is Hydrolysis of Ala-|-Gly bond in repressor LexA.. Its function is as follows. Represses a number of genes involved in the response to DNA damage (SOS response), including recA and lexA. In the presence of single-stranded DNA, RecA interacts with LexA causing an autocatalytic cleavage which disrupts the DNA-binding part of LexA, leading to derepression of the SOS regulon and eventually DNA repair. This chain is LexA repressor, found in Polaromonas naphthalenivorans (strain CJ2).